The following is a 106-amino-acid chain: UPF0145 protein Nmul_A0734 (106 aa).

This sequence belongs to the UPF0145 family.

The sequence is that of UPF0145 protein Nmul_A0734 from Nitrosospira multiformis (strain ATCC 25196 / NCIMB 11849 / C 71).